A 139-amino-acid chain; its full sequence is D-ribose pyranase (139 aa).

Histidine 20 serves as the catalytic Proton donor. Substrate is bound by residues aspartate 28, histidine 106, and 128-130 (YAN).

Belongs to the RbsD / FucU family. RbsD subfamily. Homodecamer.

The protein localises to the cytoplasm. The catalysed reaction is beta-D-ribopyranose = beta-D-ribofuranose. Its pathway is carbohydrate metabolism; D-ribose degradation; D-ribose 5-phosphate from beta-D-ribopyranose: step 1/2. Its function is as follows. Catalyzes the interconversion of beta-pyran and beta-furan forms of D-ribose. The sequence is that of D-ribose pyranase from Actinobacillus pleuropneumoniae serotype 5b (strain L20).